The primary structure comprises 340 residues: TD and POZ domain-containing protein 5 (340 aa).

An MATH domain is found at 19 to 149 (EFCYVWTIRN…ENKLTLCCKV (131 aa)). Residues 188–255 (TDCCLLVAGH…IYTGKAPHLQ (68 aa)) form the BTB domain.

Belongs to the Tdpoz family.

The polypeptide is TD and POZ domain-containing protein 5 (Mus musculus (Mouse)).